Reading from the N-terminus, the 463-residue chain is Retinoic acid receptor RXR-gamma (463 aa).

Positions 1-138 are modulating; the sequence is MYGNYSHFMK…TSPGSLVKHI (138 aa). A disordered region spans residues 16–53; sequence GGSPGHTGSTSMSPSVALPTGKPMDSHPSYTDTPVSAP. NR C4-type zinc fingers lie at residues 139–159 and 175–199; these read CAICGDRSSGKHYGVYSCEGC and CRDNKDCLIDKRQRNRCQYCRYQKC. A DNA-binding region (nuclear receptor) is located at residues 139 to 204; it reads CAICGDRSSG…RYQKCLVMGM (66 aa). The hinge stretch occupies residues 205–230; sequence KREAVQEERQRSRERAESEAECASSS. Over residues 211-222 the composition is skewed to basic and acidic residues; that stretch reads EERQRSRERAES. The segment at 211 to 232 is disordered; that stretch reads EERQRSRERAESEAECASSSHE. The region spanning 231-459 is the NR LBD domain; the sequence is HEDMPVERIL…SFLMEMLETP (229 aa).

It belongs to the nuclear hormone receptor family. NR2 subfamily. Homodimer. Heterodimer with a RAR molecule. Binds DNA preferentially as a RAR/RXR heterodimer. Interacts with RARA. In terms of processing, acetylated by EP300.

The protein localises to the nucleus. Its subcellular location is the cytoplasm. Receptor for retinoic acid. Retinoic acid receptors bind as heterodimers to their target response elements in response to their ligands, all-trans or 9-cis retinoic acid, and regulate gene expression in various biological processes. The RAR/RXR heterodimers bind to the retinoic acid response elements (RARE) composed of tandem 5'-AGGTCA-3' sites known as DR1-DR5. The high affinity ligand for RXRs is 9-cis retinoic acid. The chain is Retinoic acid receptor RXR-gamma (Rxrg) from Mus musculus (Mouse).